Here is a 299-residue protein sequence, read N- to C-terminus: Tyrosine recombinase XerD (299 aa).

A Core-binding (CB) domain is found at 2 to 89 (ETVNNNLQQF…AIRSFHQFLL (88 aa)). In terms of domain architecture, Tyr recombinase spans 110–293 (RLPKALTIEE…TKTRMRDVYA (184 aa)). Residues arginine 150, lysine 174, histidine 245, arginine 248, and histidine 271 contribute to the active site. The O-(3'-phospho-DNA)-tyrosine intermediate role is filled by tyrosine 280.

This sequence belongs to the 'phage' integrase family. XerD subfamily. Forms a cyclic heterotetrameric complex composed of two molecules of XerC and two molecules of XerD.

It localises to the cytoplasm. Site-specific tyrosine recombinase, which acts by catalyzing the cutting and rejoining of the recombining DNA molecules. The XerC-XerD complex is essential to convert dimers of the bacterial chromosome into monomers to permit their segregation at cell division. It also contributes to the segregational stability of plasmids. The polypeptide is Tyrosine recombinase XerD (Halalkalibacterium halodurans (strain ATCC BAA-125 / DSM 18197 / FERM 7344 / JCM 9153 / C-125) (Bacillus halodurans)).